We begin with the raw amino-acid sequence, 290 residues long: MKLLTASVTPFLPNYDIDFLSVEKLLHSQEKEGNGVVLLGSTGESLALTVQEKEKLVAYACSLDLKIPIIVGVPGTSLHEASAWVSLCQSYPVDGFLITSPIYTKPGIQGQILWFESILNITNKPAILYNIPSRAGSPIYLETVRALSGHPFFYGIKDSGGSIDRCREYTQVCPNLIIYCGDDGLWPQMHQCGARGLISVLSNSWPKEAHNYVEDPFNKNNSLLWCELVSWINQTTNPISIKAMLAYKQDIAYDILRLPLSIKDLQNKKVLPVLVEKMSQWSQICECVFT.

Position 42 (threonine 42) interacts with pyruvate. Tyrosine 129 (proton donor/acceptor) is an active-site residue. Catalysis depends on lysine 157, which acts as the Schiff-base intermediate with substrate. Residue isoleucine 198 participates in pyruvate binding.

The protein belongs to the DapA family. In terms of assembly, homotetramer; dimer of dimers.

It is found in the cytoplasm. The enzyme catalyses L-aspartate 4-semialdehyde + pyruvate = (2S,4S)-4-hydroxy-2,3,4,5-tetrahydrodipicolinate + H2O + H(+). It participates in amino-acid biosynthesis; L-lysine biosynthesis via DAP pathway; (S)-tetrahydrodipicolinate from L-aspartate: step 3/4. Catalyzes the condensation of (S)-aspartate-beta-semialdehyde [(S)-ASA] and pyruvate to 4-hydroxy-tetrahydrodipicolinate (HTPA). The sequence is that of 4-hydroxy-tetrahydrodipicolinate synthase from Chlamydia felis (strain Fe/C-56) (Chlamydophila felis).